The chain runs to 328 residues: GMP reductase (328 aa).

The active-site Thioimidate intermediate is C174. Position 203–226 (203–226) interacts with NADP(+); the sequence is IIADGGIRTHGDIAKSIRFGASMV.

Belongs to the IMPDH/GMPR family. GuaC type 2 subfamily.

The catalysed reaction is IMP + NH4(+) + NADP(+) = GMP + NADPH + 2 H(+). Its function is as follows. Catalyzes the irreversible NADPH-dependent deamination of GMP to IMP. It functions in the conversion of nucleobase, nucleoside and nucleotide derivatives of G to A nucleotides, and in maintaining the intracellular balance of A and G nucleotides. The sequence is that of GMP reductase from Staphylococcus saprophyticus subsp. saprophyticus (strain ATCC 15305 / DSM 20229 / NCIMB 8711 / NCTC 7292 / S-41).